The sequence spans 114 residues: TYRO protein tyrosine kinase-binding protein (114 aa).

A signal peptide spans 1–27; that stretch reads MGAPEPSWCFLFLPVLLTVGGLSPVQA. The Extracellular portion of the chain corresponds to 28 to 42; the sequence is QSDNYPGCECSSVSP. The helical transmembrane segment at 43 to 63 threads the bilayer; the sequence is GVLAGIVLGDLVLTLLIALAV. D52 is a binding site for Ca(2+). Topologically, residues 64–114 are cytoplasmic; sequence YSLGRLVSRGRGTADGTRKQHMAETESPYQELQGQRPEVYSDLNTQRQYYR. The tract at residues 72 to 114 is disordered; it reads RGRGTADGTRKQHMAETESPYQELQGQRPEVYSDLNTQRQYYR. Residues 81–109 enclose the ITAM domain; the sequence is RKQHMAETESPYQELQGQRPEVYSDLNTQ. Y92 and Y103 each carry phosphotyrosine. Polar residues predominate over residues 105–114; that stretch reads DLNTQRQYYR.

It belongs to the TYROBP family. Homodimer; disulfide-linked. Homotrimer; disulfide-linked. Homotetramer; disulfide-linked. Homotrimers and homotetramers form when low levels of partner receptors are available and is competitive with assembly with interacting receptors. They may represent alternative oligomerization states or may be intermediates in the receptor assembly process. Binding of a metal cation aids in homooligomerization through coordination of the metal ion by the subunits of the oligomer. Interacts with TREM1. Interacts with TREM2. Interacts with CLECSF5. Interacts with CD300LB and CD300C2. Interacts with CD300E. Interacts (via ITAM domain) with SYK (via SH2 domains); activates SYK mediating neutrophils and macrophages integrin-mediated activation. Interacts with KLRC2. Interacts with CD300H. Interacts with KLRD1. Interacts with SIGLEC1. In terms of processing, following ligand binding by associated receptors, tyrosine phosphorylated in the ITAM domain which leads to activation of additional tyrosine kinases and subsequent cell activation.

Its subcellular location is the cell membrane. Adapter protein which non-covalently associates with activating receptors found on the surface of a variety of immune cells to mediate signaling and cell activation following ligand binding by the receptors. TYROBP is tyrosine-phosphorylated in the ITAM domain following ligand binding by the associated receptors which leads to activation of additional tyrosine kinases and subsequent cell activation. Also has an inhibitory role in some cells. Non-covalently associates with activating receptors of the CD300 family to mediate cell activation. Also mediates cell activation through association with activating receptors of the CD200R family. Required for neutrophil activation mediated by integrin. Required for the activation of myeloid cells mediated by the CLEC5A/MDL1 receptor. Associates with natural killer (NK) cell receptors such as the KLRD1/KLRC2 heterodimer to mediate NK cell activation. Associates with TREM1 to mediate activation of neutrophils and monocytes. Associates with TREM2 on monocyte-derived dendritic cells to mediate up-regulation of chemokine receptor CCR7 and dendritic cell maturation and survival. PAssociation with TREM2 mediates cytokine-induced formation of multinucleated giant cells which are formed by the fusion of macrophages. Stabilizes the TREM2 C-terminal fragment (TREM2-CTF) produced by TREM2 ectodomain shedding which suppresses the release of pro-inflammatory cytokines. In microglia, required with TREM2 for phagocytosis of apoptotic neurons. Required with ITGAM/CD11B in microglia to control production of microglial superoxide ions which promote the neuronal apoptosis that occurs during brain development. Promotes pro-inflammatory responses in microglia following nerve injury which accelerates degeneration of injured neurons. ositively regulates the expression of the IRAK3/IRAK-M kinase and IL10 production by liver dendritic cells and inhibits their T cell allosimulatory ability. Negatively regulates B cell proliferation. Required for CSF1-mediated osteoclast cytoskeletal organization. Positively regulates multinucleation during osteoclast development. The sequence is that of TYRO protein tyrosine kinase-binding protein from Rattus norvegicus (Rat).